Reading from the N-terminus, the 334-residue chain is L-lactate dehydrogenase B chain (334 aa).

Ala2 bears the N-acetylalanine mark. At Lys7 the chain carries N6-acetyllysine. Ser44 is subject to Phosphoserine. NAD(+) contacts are provided by residues 53-58 and Arg100; that span reads DVLEDK. Lys58 is subject to N6-acetyllysine. Position 107 (Arg107) interacts with substrate. Lys119 bears the N6-acetyllysine mark. Asn139 is a binding site for NAD(+). Substrate-binding residues include Asn139 and Arg170. His194 (proton acceptor) is an active-site residue. Tyr240 is subject to Phosphotyrosine. Residue Thr249 coordinates substrate. Lys329 is modified (N6-acetyllysine).

Belongs to the LDH/MDH superfamily. LDH family. In terms of assembly, homotetramer. Interacts with PTEN upstream reading frame protein MP31; the interaction leads to inhibition of mitochondrial lactate dehydrogenase activity, preventing conversion of lactate to pyruvate in mitochondria.

The protein resides in the cytoplasm. Its subcellular location is the mitochondrion inner membrane. The catalysed reaction is (S)-lactate + NAD(+) = pyruvate + NADH + H(+). It participates in fermentation; pyruvate fermentation to lactate; (S)-lactate from pyruvate: step 1/1. Functionally, interconverts simultaneously and stereospecifically pyruvate and lactate with concomitant interconversion of NADH and NAD(+). The sequence is that of L-lactate dehydrogenase B chain (LDHB) from Monodelphis domestica (Gray short-tailed opossum).